A 417-amino-acid polypeptide reads, in one-letter code: MAEYKNYTLNFGPVHPAAHGVLRLILELDGENVVRADPHVGLLHRGTEKLAEFKPYNQSIGYMDRLDYVSMMCNEHAYVMAIEKLLQLEVPERAKYIRVMFAEMTRILNHLLWVAACGIDLGAMTVFLYAFRVREDLFDCYEAVSGARMHAAYFRPGGVARDLPTQMPQYQKTRFTSKRKAKKLNEPRQGSMLDFLDHFVVDFEKSLDEIDTLLTDNRLWKQRTVDIGTVTAERAKELGFTGPMLRGSGVAWDLRKTQPYEVYHKLEFDIPIGANGDCYDRYLVRMAEMRESNKLIKQCVDWLRANPGPVLSDNHKVAPPKRNAMKNNMEELIHHFKLFSEGYCTPEGEVYVGTEHPKGEFGVYIKSDGANKPYRLKMRAPGFAHISAMDELLSGHMLADTPAIISTIDVVFGDVDR.

It belongs to the complex I 49 kDa subunit family. In terms of assembly, NDH-1 is composed of 14 different subunits. Subunits NuoB, C, D, E, F, and G constitute the peripheral sector of the complex.

Its subcellular location is the cell inner membrane. It catalyses the reaction a quinone + NADH + 5 H(+)(in) = a quinol + NAD(+) + 4 H(+)(out). Functionally, NDH-1 shuttles electrons from NADH, via FMN and iron-sulfur (Fe-S) centers, to quinones in the respiratory chain. The immediate electron acceptor for the enzyme in this species is believed to be ubiquinone. Couples the redox reaction to proton translocation (for every two electrons transferred, four hydrogen ions are translocated across the cytoplasmic membrane), and thus conserves the redox energy in a proton gradient. This is NADH-quinone oxidoreductase subunit D from Francisella tularensis subsp. novicida (strain U112).